A 101-amino-acid polypeptide reads, in one-letter code: Small ribosomal subunit protein uS14 (101 aa).

It belongs to the universal ribosomal protein uS14 family. In terms of assembly, part of the 30S ribosomal subunit. Contacts proteins S3 and S10.

Binds 16S rRNA, required for the assembly of 30S particles and may also be responsible for determining the conformation of the 16S rRNA at the A site. The chain is Small ribosomal subunit protein uS14 from Polynucleobacter asymbioticus (strain DSM 18221 / CIP 109841 / QLW-P1DMWA-1) (Polynucleobacter necessarius subsp. asymbioticus).